Reading from the N-terminus, the 267-residue chain is Multivesicular body subunit 12A (267 aa).

Positions 7–146 (AAPLSGVGWA…SFAIWCKKGA (140 aa)) constitute an MABP domain. The SH3-binding motif lies at 154–159 (PVPKPR). Residues 210–259 (MDGVPFTLHPKFERSPKSDSSAILTDLTVKSLADIEKEYNYTFVVERTAA) enclose the UMA domain.

This sequence belongs to the MVB12 family. Component of the ESCRT-I complex (endosomal sorting complex required for transport I).

The protein resides in the cytoplasm. The protein localises to the endosome. It is found in the late endosome membrane. Component of the ESCRT-I complex, a regulator of vesicular trafficking process. Required for the sorting of endocytic ubiquitinated cargos into multivesicular bodies. The chain is Multivesicular body subunit 12A (MVB12A) from Gallus gallus (Chicken).